A 1597-amino-acid polypeptide reads, in one-letter code: Rho guanine nucleotide exchange factor 5 (1597 aa).

Disordered regions lie at residues 138–246 (PFSS…EGTL), 258–455 (EEQM…SLEP), and 467–1072 (GSFL…VFRE). A Phosphoserine modification is found at Ser-184. The span at 192 to 204 (ETNQNEGSESGTI) shows a compositional bias: polar residues. The span at 217-237 (ESQGLLHPQEVQVLEEQGQQE) shows a compositional bias: low complexity. Over residues 266-278 (NDEKGEQKQKQEQ) the composition is skewed to basic and acidic residues. Positions 299–309 (GLNDGEWEQED) are enriched in acidic residues. 2 stretches are compositionally biased toward basic and acidic residues: residues 323 to 368 (GEER…KEKG) and 394 to 404 (RSREEENEHHG). A compositionally biased stretch (polar residues) spans 428-438 (LMTQIPGTQTE). Ser-445 and Ser-450 each carry phosphoserine. A compositionally biased stretch (basic and acidic residues) spans 474–490 (SPDKEIDQNSQQEESRL). The span at 512-522 (PRTPDSAPPSP) shows a compositional bias: pro residues. Polar residues-rich tracts occupy residues 583 to 601 (STGT…TVQH) and 655 to 682 (DYST…NLER). A compositionally biased stretch (basic and acidic residues) spans 731–746 (QRRDTHPSVVETDGHA). Composition is skewed to pro residues over residues 812-828 (PLPP…PPIS) and 838-856 (PLPP…PLPP). Arg-866 is modified (asymmetric dimethylarginine). The span at 901-920 (ATARSTESFTSTSRSKSEVS) shows a compositional bias: low complexity. Polar residues predominate over residues 926–941 (SNMTNFLCPSSPTTPW). Basic and acidic residues predominate over residues 950-969 (SKDEAGVSEHPEAPAREPLR). Ser-983, Ser-1011, and Ser-1044 each carry phosphoserine. The span at 990–1012 (QPEKPSHLHLEKASSWPHRRDSG) shows a compositional bias: basic and acidic residues. The segment covering 1057–1072 (AVEKHPGPSDTVVFRE) has biased composition (basic and acidic residues). Ser-1126 carries the post-translational modification Phosphoserine. The DH domain maps to 1174 to 1358 (KLQEVKFELI…EQLIRDCNNN (185 aa)). The PH domain occupies 1390 to 1502 (WLVKSGELTA…WISALAMPRE (113 aa)). Residues 1510–1571 (YNSPQVQCLR…PVQQVEFISN (62 aa)) form the SH3 domain.

As to quaternary structure, interacts with SRC. Forms a ternary complex with SRC and the PI3K 85 kDa subunit. Interacts with and is activated by the heterodimer formed by GNB1 and GNG2. Interacts with ODAM (via C-terminus). Interacts with RHOA. Activation of SRC induces tyrosine phosphorylation of ARHGEF5. As to expression, ubiquitously expressed with highest levels in placenta. High levels are also found in colon, kidney, trachea, prostate, liver, pancreas, pituitary gland, thyroid gland and mammary gland. In fetal tissues, expressed at high levels in kidney, lung and liver. Expressed at low levels in lung and heart.

It is found in the cytoplasm. The protein resides in the nucleus. The protein localises to the cell projection. Its subcellular location is the podosome. Guanine nucleotide exchange factor which activates Rho GTPases. Strongly activates RHOA. Also strongly activates RHOB, weakly activates RHOC and RHOG and shows no effect on RHOD, RHOV, RHOQ or RAC1. Involved in regulation of cell shape and actin cytoskeletal organization. Plays a role in actin organization by generating a loss of actin stress fibers and the formation of membrane ruffles and filopodia. Required for SRC-induced podosome formation. Involved in positive regulation of immature dendritic cell migration. The polypeptide is Rho guanine nucleotide exchange factor 5 (ARHGEF5) (Homo sapiens (Human)).